A 370-amino-acid polypeptide reads, in one-letter code: MASETAFQATGAGRIVISVDAMGGDRGPAAVVAGLAESASAIPGAYFIVHGDEAHLGPMIAKRKDLKGRCEIRHAPRVVTMNDKPSQVMRHGEGTSMWSCIESVRAGEATVAVSCGNTGALMAVSMIRLRKLPGVNRPAIACMWPSRNPGGFNVMLDVGADIKADAEDLAQYALMGASYARNGLSLERPRVGLLNVGTEEHKGRAELKVAQDLISANAAAGAYEFVGFIEGGDIPGRRCDVIVTDGFTGNVALKTGEGTAKLISDFLREAFGANILSKMAAVLALGSLKRLQKRIDPRRVNGGVFLGLNGTVVKSHGSADGTGVAAAIALAARLAQSGFHERLAARLASAGRAGQDAPDEMAAPGRSEKR.

Residues S349–R370 form a disordered region.

The protein belongs to the PlsX family. Homodimer. Probably interacts with PlsY.

The protein localises to the cytoplasm. The enzyme catalyses a fatty acyl-[ACP] + phosphate = an acyl phosphate + holo-[ACP]. It participates in lipid metabolism; phospholipid metabolism. In terms of biological role, catalyzes the reversible formation of acyl-phosphate (acyl-PO(4)) from acyl-[acyl-carrier-protein] (acyl-ACP). This enzyme utilizes acyl-ACP as fatty acyl donor, but not acyl-CoA. The chain is Phosphate acyltransferase from Cereibacter sphaeroides (strain ATCC 17023 / DSM 158 / JCM 6121 / CCUG 31486 / LMG 2827 / NBRC 12203 / NCIMB 8253 / ATH 2.4.1.) (Rhodobacter sphaeroides).